Here is a 546-residue protein sequence, read N- to C-terminus: MAAKQVLFADDARVRIVRGVNVLANAVKTTLGPKGRNVVLERSFGAPTVTKDGVSVAKEIELKDKFENIGAQLVKDVASKTSDNAGDGTTTATVLAQAIVQEGLKYVAAGFNPIDLKRGIDKAVAAAVVELKKASKPVTTSKEIAQVGSISANSDSSIGQIIADAMDKVGKEGVITVEDGKSLENELDVVEGMQFDRGYLSPYFINNPEKQVAALDDPFVLIYDKKISNIRDLLPVLEQVAKSSRPLLIIAEDVEGEALATLVVNNIRGILKTTAVKAPGFGDRRKAMLEDIAILTGGTVISEETGMSLEKATLQELGQAKRIEVAKENTTIIDGAGDGKSIEARVKQIRAQIEEATSDYDREKLQERVAKLAGGVAVIRVGAATEVEMKEKKARVEDALHATRAAVEEGVVAGGGVALLRAKQAIAGLQGDTPDQNAGIKLILRAVEEPLRTIVTNAGEEASVVVNNVLNGKGNYGYNAATGEYTDLVEQGVLDPTKVTRTALQNAASVASLLLTAEAAVVELAEDKPAAPAMPGGMGGMGGMDF.

ATP is bound by residues 30–33, lysine 51, 87–91, glycine 415, 479–481, and aspartate 495; these read TLGP, DGTTT, and NAA.

It belongs to the chaperonin (HSP60) family. Forms a cylinder of 14 subunits composed of two heptameric rings stacked back-to-back. Interacts with the co-chaperonin GroES.

It is found in the cytoplasm. It catalyses the reaction ATP + H2O + a folded polypeptide = ADP + phosphate + an unfolded polypeptide.. Its function is as follows. Together with its co-chaperonin GroES, plays an essential role in assisting protein folding. The GroEL-GroES system forms a nano-cage that allows encapsulation of the non-native substrate proteins and provides a physical environment optimized to promote and accelerate protein folding. This is Chaperonin GroEL from Bordetella avium (strain 197N).